The primary structure comprises 303 residues: MWFKNLTVYRFNKPFSVDPDSLEKSLEDFTFSPCSSQDISKFGFSKAMGKHGETLIHTAGDRHLICATKEEKILPSQVIKEALEEKVGHLEAEENRKLTKKEKDALKDEITTTLLPRAFSRRSQIRALILPEIQMILVDSSSAAKSEELMALLRKAIGTLPIIPISFKTPIETQLTEWLKEGKTPPAFEMQDEAELKSDSDEGGIVRFKQQDLSENEVLAHIEVGKQVHKLALHFGQSIAFVLQSDAAIKRLKFSEEFRADNDDLGNDDPMARLDADFALMSSELIALINAVVDALGGLEDSI.

This sequence belongs to the RdgC family.

The protein localises to the cytoplasm. Its subcellular location is the nucleoid. Its function is as follows. May be involved in recombination. This is Recombination-associated protein RdgC from Shewanella halifaxensis (strain HAW-EB4).